The primary structure comprises 226 residues: ATP-dependent dethiobiotin synthetase BioD (226 aa).

ATP is bound at residue 12–17; it reads GVGKTV. Residue T16 participates in Mg(2+) binding. Residue K37 is part of the active site. Substrate is bound at residue T41. Residues D49, 108–111, 169–170, and 197–199 each bind ATP; these read EGAG, GS, and PAG. 2 residues coordinate Mg(2+): D49 and E108.

This sequence belongs to the dethiobiotin synthetase family. Homodimer. Requires Mg(2+) as cofactor.

Its subcellular location is the cytoplasm. The enzyme catalyses (7R,8S)-7,8-diammoniononanoate + CO2 + ATP = (4R,5S)-dethiobiotin + ADP + phosphate + 3 H(+). Its pathway is cofactor biosynthesis; biotin biosynthesis; biotin from 7,8-diaminononanoate: step 1/2. Catalyzes a mechanistically unusual reaction, the ATP-dependent insertion of CO2 between the N7 and N8 nitrogen atoms of 7,8-diaminopelargonic acid (DAPA, also called 7,8-diammoniononanoate) to form a ureido ring. This Mycobacterium tuberculosis (strain ATCC 25177 / H37Ra) protein is ATP-dependent dethiobiotin synthetase BioD.